We begin with the raw amino-acid sequence, 148 residues long: Small ribosomal subunit protein bS16 (148 aa).

Residues 106 to 148 (QAAARAAAGAEDRPATTPKKAKKSGSAEEAEAAPATDAPAAGQ) are disordered. Residues 137 to 148 (AAPATDAPAAGQ) are compositionally biased toward low complexity.

This sequence belongs to the bacterial ribosomal protein bS16 family.

The protein is Small ribosomal subunit protein bS16 of Frankia casuarinae (strain DSM 45818 / CECT 9043 / HFP020203 / CcI3).